A 119-amino-acid polypeptide reads, in one-letter code: UPF0212 protein Mlab_0931 (119 aa).

This sequence belongs to the UPF0212 family.

This chain is UPF0212 protein Mlab_0931, found in Methanocorpusculum labreanum (strain ATCC 43576 / DSM 4855 / Z).